Consider the following 357-residue polypeptide: DNA polymerase IV (357 aa).

The UmuC domain occupies 4–185 (IIHCDCDCFY…LPVERLFGVG (182 aa)). Mg(2+) contacts are provided by D8 and D103. E104 is a catalytic residue.

This sequence belongs to the DNA polymerase type-Y family. As to quaternary structure, monomer. It depends on Mg(2+) as a cofactor.

The protein resides in the cytoplasm. It catalyses the reaction DNA(n) + a 2'-deoxyribonucleoside 5'-triphosphate = DNA(n+1) + diphosphate. In terms of biological role, poorly processive, error-prone DNA polymerase involved in untargeted mutagenesis. Copies undamaged DNA at stalled replication forks, which arise in vivo from mismatched or misaligned primer ends. These misaligned primers can be extended by PolIV. Exhibits no 3'-5' exonuclease (proofreading) activity. May be involved in translesional synthesis, in conjunction with the beta clamp from PolIII. The protein is DNA polymerase IV of Ralstonia nicotianae (strain ATCC BAA-1114 / GMI1000) (Ralstonia solanacearum).